Reading from the N-terminus, the 180-residue chain is Dual-action ribosomal maturation protein DarP (180 aa).

The protein belongs to the DarP family.

The protein resides in the cytoplasm. Functionally, member of a network of 50S ribosomal subunit biogenesis factors which assembles along the 30S-50S interface, preventing incorrect 23S rRNA structures from forming. Promotes peptidyl transferase center (PTC) maturation. The chain is Dual-action ribosomal maturation protein DarP from Pasteurella multocida (strain Pm70).